We begin with the raw amino-acid sequence, 491 residues long: Ketol-acid reductoisomerase (NADP(+)) (491 aa).

The region spanning 15 to 208 (AQLGKCRFMG…GGHRAGVLES (194 aa)) is the KARI N-terminal Rossmann domain. NADP(+)-binding positions include 45–48 (CGAQ), arginine 68, arginine 76, serine 78, and 108–110 (DKQ). Residue histidine 132 is part of the active site. Glycine 158 is a binding site for NADP(+). KARI C-terminal knotted domains follow at residues 209–344 (SFVA…TAPQ) and 345–484 (YEGK…MTDM). Residues aspartate 217, glutamate 221, glutamate 389, and glutamate 393 each contribute to the Mg(2+) site. Position 414 (serine 414) interacts with substrate.

Belongs to the ketol-acid reductoisomerase family. It depends on Mg(2+) as a cofactor.

It carries out the reaction (2R)-2,3-dihydroxy-3-methylbutanoate + NADP(+) = (2S)-2-acetolactate + NADPH + H(+). It catalyses the reaction (2R,3R)-2,3-dihydroxy-3-methylpentanoate + NADP(+) = (S)-2-ethyl-2-hydroxy-3-oxobutanoate + NADPH + H(+). The protein operates within amino-acid biosynthesis; L-isoleucine biosynthesis; L-isoleucine from 2-oxobutanoate: step 2/4. Its pathway is amino-acid biosynthesis; L-valine biosynthesis; L-valine from pyruvate: step 2/4. Its function is as follows. Involved in the biosynthesis of branched-chain amino acids (BCAA). Catalyzes an alkyl-migration followed by a ketol-acid reduction of (S)-2-acetolactate (S2AL) to yield (R)-2,3-dihydroxy-isovalerate. In the isomerase reaction, S2AL is rearranged via a Mg-dependent methyl migration to produce 3-hydroxy-3-methyl-2-ketobutyrate (HMKB). In the reductase reaction, this 2-ketoacid undergoes a metal-dependent reduction by NADPH to yield (R)-2,3-dihydroxy-isovalerate. The protein is Ketol-acid reductoisomerase (NADP(+)) of Escherichia coli (strain ATCC 8739 / DSM 1576 / NBRC 3972 / NCIMB 8545 / WDCM 00012 / Crooks).